The following is a 250-amino-acid chain: Methionine aminopeptidase (250 aa).

Histidine 77 serves as a coordination point for substrate. A divalent metal cation is bound by residues aspartate 94, aspartate 105, and histidine 169. A substrate-binding site is contributed by histidine 176. Glutamate 202 and glutamate 235 together coordinate a divalent metal cation.

The protein belongs to the peptidase M24A family. Methionine aminopeptidase type 1 subfamily. Monomer. Co(2+) is required as a cofactor. Requires Zn(2+) as cofactor. The cofactor is Mn(2+). It depends on Fe(2+) as a cofactor.

It carries out the reaction Release of N-terminal amino acids, preferentially methionine, from peptides and arylamides.. Its function is as follows. Removes the N-terminal methionine from nascent proteins. The N-terminal methionine is often cleaved when the second residue in the primary sequence is small and uncharged (Met-Ala-, Cys, Gly, Pro, Ser, Thr, or Val). Requires deformylation of the N(alpha)-formylated initiator methionine before it can be hydrolyzed. The chain is Methionine aminopeptidase from Mycoplasmoides gallisepticum (strain R(low / passage 15 / clone 2)) (Mycoplasma gallisepticum).